Reading from the N-terminus, the 249-residue chain is DNA polymerase sliding clamp (249 aa).

Belongs to the PCNA family. As to quaternary structure, homotrimer. The subunits circularize to form a toroid; DNA passes through its center. Replication factor C (RFC) is required to load the toroid on the DNA.

In terms of biological role, sliding clamp subunit that acts as a moving platform for DNA processing. Responsible for tethering the catalytic subunit of DNA polymerase and other proteins to DNA during high-speed replication. The protein is DNA polymerase sliding clamp of Thermococcus fumicolans.